Reading from the N-terminus, the 925-residue chain is Aspulvinone E synthetase melA (925 aa).

The tract at residues 11–434 (ETAAARNGDG…GGRAKETIII (424 aa)) is adenylation (A) domain. The Carrier domain maps to 564-644 (SPKNDFEKGL…ELAAALDNLY (81 aa)). Ser601 is subject to O-(pantetheine 4'-phosphoryl)serine. Positions 663-923 (PLWLVHPGAG…KILRSALAER (261 aa)) are thioesterase (TE) domain.

This sequence belongs to the NRP synthetase family.

It localises to the cytoplasm. The enzyme catalyses 2 3-(4-hydroxyphenyl)pyruvate + AH2 + 2 ATP + O2 = aspulvinone E + A + 2 AMP + CO2 + 2 diphosphate + H2O + H(+). Nonribosomal peptide synthase; part of the gene cluster that mediates the biosynthesis of Asp-melanin, a pigment that confers resistance against UV light and hampers phagocytosis by soil amoeba. The nonribosomal peptide synthase melA converts 4-hydroxyphenylpyruvate (4-HPPA) to aspulvinone E. The tyrosinase tyrP then performs hydroxylations of both aromatic moieties of aspulvinone E. The product of tyrP is highly unstable, and, due to the high reactivity of methides and ortho-diquinones, the polymeric Asp-melanin forms spontaneously. In Aspergillus terreus (strain NIH 2624 / FGSC A1156), this protein is Aspulvinone E synthetase melA.